Reading from the N-terminus, the 397-residue chain is Lysophospholipid transporter LplT (397 aa).

11 helical membrane passes run 16–36 (MLAVICAQFLSAFGDNALLFA), 53–73 (VLQMLFVGAYILFAPFVGQFA), 91–111 (LGAGCICFGVNPFIGYTLVGI), 139–159 (LMESSTIAAILLGSMAGGILA), 164–184 (LAALIVCALVYGGAVVANLWI), 227–247 (LFWGAGVTLRFLLVIWVPVAL), 253–273 (AMPTYLNAMVAVGIVLGAGAA), 281–301 (TVSRCMPAGILIGIAVIAFAV), 305–325 (LLPAFGLLLLLGVFGGFFIVP), 352–372 (NVAMLLMLGLYSLAVSVGVPP), and 373–393 (VAVGIGFGAVFAVAIAALWVW).

Belongs to the major facilitator superfamily. LplT (TC 2.A.1.42) family.

It is found in the cell inner membrane. In terms of biological role, catalyzes the facilitated diffusion of 2-acyl-glycero-3-phosphoethanolamine (2-acyl-GPE) into the cell. The protein is Lysophospholipid transporter LplT of Klebsiella pneumoniae subsp. pneumoniae (strain ATCC 700721 / MGH 78578).